A 327-amino-acid chain; its full sequence is Phenylalanine--tRNA ligase alpha subunit (327 aa).

Glu252 is a binding site for Mg(2+).

It belongs to the class-II aminoacyl-tRNA synthetase family. Phe-tRNA synthetase alpha subunit type 1 subfamily. As to quaternary structure, tetramer of two alpha and two beta subunits. It depends on Mg(2+) as a cofactor.

The protein localises to the cytoplasm. The enzyme catalyses tRNA(Phe) + L-phenylalanine + ATP = L-phenylalanyl-tRNA(Phe) + AMP + diphosphate + H(+). This chain is Phenylalanine--tRNA ligase alpha subunit, found in Cronobacter sakazakii (strain ATCC BAA-894) (Enterobacter sakazakii).